The sequence spans 596 residues: Elongation factor 4 (596 aa).

The region spanning 2–184 (DHIRNFSIIA…AVVARIPPPK (183 aa)) is the tr-type G domain. GTP contacts are provided by residues 14–19 (DHGKST) and 131–134 (NKID).

It belongs to the TRAFAC class translation factor GTPase superfamily. Classic translation factor GTPase family. LepA subfamily.

The protein localises to the cell inner membrane. The enzyme catalyses GTP + H2O = GDP + phosphate + H(+). Functionally, required for accurate and efficient protein synthesis under certain stress conditions. May act as a fidelity factor of the translation reaction, by catalyzing a one-codon backward translocation of tRNAs on improperly translocated ribosomes. Back-translocation proceeds from a post-translocation (POST) complex to a pre-translocation (PRE) complex, thus giving elongation factor G a second chance to translocate the tRNAs correctly. Binds to ribosomes in a GTP-dependent manner. The sequence is that of Elongation factor 4 from Dechloromonas aromatica (strain RCB).